A 97-amino-acid polypeptide reads, in one-letter code: UPF0390 protein CNBD1430 (97 aa).

Disordered regions lie at residues 1 to 57 and 75 to 97; these read MAQG…INNS and RNVGELESGEGKDGKAKGKGKSR. The span at 29 to 46 shows a compositional bias: basic and acidic residues; it reads GKREVAPKDRQRVLERSQ. Residues 48–57 show a composition bias toward polar residues; it reads KQLSSKINNS.

It belongs to the UPF0390 family.

The chain is UPF0390 protein CNBD1430 from Cryptococcus neoformans var. neoformans serotype D (strain B-3501A) (Filobasidiella neoformans).